The sequence spans 495 residues: Cysteine--tRNA ligase (495 aa).

A Zn(2+)-binding site is contributed by Cys29. The 'HIGH' region signature appears at 31–41 (VTVYDDSHVGH). Cys209, His234, and Glu238 together coordinate Zn(2+). Residues 266–270 (KMSKS) carry the 'KMSKS' region motif. ATP is bound at residue Lys269.

This sequence belongs to the class-I aminoacyl-tRNA synthetase family. As to quaternary structure, monomer. Zn(2+) is required as a cofactor.

The protein resides in the cytoplasm. It catalyses the reaction tRNA(Cys) + L-cysteine + ATP = L-cysteinyl-tRNA(Cys) + AMP + diphosphate. This is Cysteine--tRNA ligase (cysS) from Aquifex aeolicus (strain VF5).